The following is a 286-amino-acid chain: 4-hydroxybenzoate octaprenyltransferase (286 aa).

A run of 8 helical transmembrane segments spans residues 20–40, 43–63, 95–115, 116–136, 142–162, 167–187, 210–230, and 235–255; these read IGTF…AGGM, LKVL…GCII, ILFV…NPLV, VQLS…KRFT, FLGV…LGTV, WWLF…YAMV, QIIG…GLSA, and VFAL…KLIF.

This sequence belongs to the UbiA prenyltransferase family. It depends on Mg(2+) as a cofactor.

It localises to the cell inner membrane. It carries out the reaction all-trans-octaprenyl diphosphate + 4-hydroxybenzoate = 4-hydroxy-3-(all-trans-octaprenyl)benzoate + diphosphate. Its pathway is cofactor biosynthesis; ubiquinone biosynthesis. In terms of biological role, catalyzes the prenylation of para-hydroxybenzoate (PHB) with an all-trans polyprenyl group. Mediates the second step in the final reaction sequence of ubiquinone-8 (UQ-8) biosynthesis, which is the condensation of the polyisoprenoid side chain with PHB, generating the first membrane-bound Q intermediate 3-octaprenyl-4-hydroxybenzoate. In Shewanella loihica (strain ATCC BAA-1088 / PV-4), this protein is 4-hydroxybenzoate octaprenyltransferase.